Reading from the N-terminus, the 506-residue chain is Conglutin alpha 1 (506 aa).

The first 19 residues, 1–19, serve as a signal peptide directing secretion; that stretch reads MANKLLALSLFLLFSGCFA. 2 disulfides stabilise this stretch: cysteine 31–cysteine 64 and cysteine 107–cysteine 328. Positions 36-235 constitute a Cupin type-1 1 domain; the sequence is LNALEPDNSV…AFSVDREIVR (200 aa). Disordered regions lie at residues 111–131, 195–216, and 251–322; these read YEEPQEQEQGQGPRPQDRHQK, QQKEGGQGQQQEGGNEGGNVLS, and VKEG…DRNG. The span at 195 to 207 shows a compositional bias: low complexity; the sequence is QQKEGGQGQQQEG. A compositionally biased stretch (acidic residues) spans 270–280; the sequence is EEEEEEEEEEE. A compositionally biased stretch (basic residues) spans 306–315; that stretch reads QVRRVRRPHH. One can recognise a Cupin type-1 2 domain in the interval 334–483; sequence HNIGQSTSPD…AFNLDRDQAR (150 aa). N-linked (GlcNAc...) asparagine glycans are attached at residues asparagine 397 and asparagine 439.

Belongs to the 11S seed storage protein (globulins) family. In terms of assembly, hexamer; each subunit is composed of an acidic and a basic chain derived from a single precursor and linked by a disulfide bond. Component of globulins complexes which accumulate in seeds. As to expression, expressed in developing cotyledons and in the embryonic axis of germinating seeds.

Functionally, sulfur-rich seed storage protein. This protein found in the seeds of many leguminous and non-leguminous plants is the source of sulfur-containing amino acids in seed meals. The protein is Conglutin alpha 1 of Lupinus angustifolius (Narrow-leaved blue lupine).